The chain runs to 133 residues: WMLYEHPNYTGHQYFLRRGEYPDFQQWMGLNDSIRSCRVIPQHRGSFRLRIYEREEFRGQMMEFTEDCPQVHEEFNYHDIHSCNVLEGHWILYEQPNYRGRQYYLRPGEYRRYTEWGAVTPRVGAFRRVQEMF.

The region spanning 1–41 is the Beta/gamma crystallin 'Greek key' 2 domain; sequence WMLYEHPNYTGHQYFLRRGEYPDFQQWMGLNDSIRSCRVIP. Positions 42–46 are connecting peptide; that stretch reads QHRGS. 2 Beta/gamma crystallin 'Greek key' domains span residues 47-87 and 88-130; these read FRLR…NVLE and GHWI…RRVQ.

It belongs to the beta/gamma-crystallin family. In terms of assembly, monomer.

Its function is as follows. Crystallins are the dominant structural components of the vertebrate eye lens. This chain is Gamma-crystallin 1, found in Rana temporaria (European common frog).